The primary structure comprises 115 residues: Meromycolate extension acyl carrier protein (115 aa).

Residues 3 to 81 (VTQEEIIAGI…DVVAYIQKLE (79 aa)) enclose the Carrier domain. Residue S41 is modified to O-(pantetheine 4'-phosphoryl)serine.

This sequence belongs to the acyl carrier protein (ACP) family. In terms of processing, 4'-phosphopantetheine is transferred from CoA to a specific serine of apo-AcpM.

It localises to the cytoplasm. Acyl carrier protein involved in meromycolate extension. The chain is Meromycolate extension acyl carrier protein (acpM) from Mycobacterium bovis (strain ATCC BAA-935 / AF2122/97).